Consider the following 312-residue polypeptide: Very-long-chain 3-oxoacyl-CoA reductase (312 aa).

Residues 4-24 (ALPAAGFLYWVGAGTVAYLAL) form a helical membrane-spanning segment. 50-79 (GEWAVVTGGTDGIGKSYAEELAKRGMKVVL) contributes to the NADP(+) binding site. Helical transmembrane passes span 182-202 (GAILNISSGSGMFPVPLLTIY) and 271-291 (GYLIHVLMGWIISNLPSWIYL). Ser-189 contacts substrate. The active-site Proton acceptor is the Tyr-202. A Di-lysine motif motif is present at residues 308 to 312 (KIKKN).

The protein belongs to the short-chain dehydrogenases/reductases (SDR) family. 17-beta-HSD 3 subfamily.

It is found in the endoplasmic reticulum membrane. It catalyses the reaction a very-long-chain (3R)-3-hydroxyacyl-CoA + NADP(+) = a very-long-chain 3-oxoacyl-CoA + NADPH + H(+). The catalysed reaction is 17beta-estradiol + NAD(+) = estrone + NADH + H(+). It carries out the reaction 17beta-estradiol + NADP(+) = estrone + NADPH + H(+). The enzyme catalyses 3-oxooctadecanoyl-CoA + NADPH + H(+) = (3R)-hydroxyoctadecanoyl-CoA + NADP(+). It catalyses the reaction (7Z,10Z,13Z,16Z)-3-oxodocosatetraenoyl-CoA + NADPH + H(+) = (3R)-hydroxy-(7Z,10Z,13Z,16Z)-docosatetraenoyl-CoA + NADP(+). The catalysed reaction is 3-oxo-(7Z,10Z,13Z,16Z,19Z)-docosapentaenoyl-CoA + NADPH + H(+) = (3R)-hydroxy-(7Z,10Z,13Z,16Z,19Z)-docosapentaenoyl-CoA + NADP(+). It carries out the reaction (8Z,11Z,14Z)-3-oxoeicosatrienoyl-CoA + NADPH + H(+) = (3R)-hydroxy-(8Z,11Z,14Z)-eicosatrienoyl-CoA + NADP(+). The protein operates within lipid metabolism; fatty acid biosynthesis. It functions in the pathway steroid biosynthesis; estrogen biosynthesis. In terms of biological role, catalyzes the second of the four reactions of the long-chain fatty acids elongation cycle. This endoplasmic reticulum-bound enzymatic process, allows the addition of two carbons to the chain of long- and very long-chain fatty acids/VLCFAs per cycle. This enzyme has a 3-ketoacyl-CoA reductase activity, reducing 3-ketoacyl-CoA to 3-hydroxyacyl-CoA, within each cycle of fatty acid elongation. Thereby, it may participate in the production of VLCFAs of different chain lengths that are involved in multiple biological processes as precursors of membrane lipids and lipid mediators. May also catalyze the transformation of estrone (E1) into estradiol (E2) and play a role in estrogen formation. The chain is Very-long-chain 3-oxoacyl-CoA reductase (HSD17B12) from Macaca fascicularis (Crab-eating macaque).